A 584-amino-acid polypeptide reads, in one-letter code: ATP-dependent RNA helicase MRH4, mitochondrial (584 aa).

Residues 1 to 49 constitute a mitochondrion transit peptide; that stretch reads MQPVFSRFPYASKSGFISLASRGYAVSRNSGSSIKSNLRSKPRADTRWN. Over residues 28–39 the composition is skewed to polar residues; that stretch reads RNSGSSIKSNLR. The tract at residues 28–92 is disordered; it reads RNSGSSIKSN…QTQQQFQYGE (65 aa). Over residues 63–79 the composition is skewed to basic and acidic residues; it reads GKGDHRSHSRSDSRAKP. The Q motif motif lies at 162 to 169; sequence HLKPSPIQ. The Helicase ATP-binding domain maps to 179–366; sequence TLMDPQLQVR…TRLFPTVGVI (188 aa). Position 192–199 (192–199) interacts with ATP; sequence AETGSGKT. A DEAD box motif is present at residues 314-317; sequence DEAD. In terms of domain architecture, Helicase C-terminal spans 397–584; that stretch reads ALAQILYSIN…SIVSKNVSIS (188 aa).

The protein belongs to the DEAD box helicase family. MRH4 subfamily.

The protein localises to the mitochondrion. The enzyme catalyses ATP + H2O = ADP + phosphate + H(+). In terms of biological role, ATP-binding RNA helicase involved in mitochondrial RNA metabolism. Required for maintenance of mitochondrial DNA. In Kluyveromyces lactis (strain ATCC 8585 / CBS 2359 / DSM 70799 / NBRC 1267 / NRRL Y-1140 / WM37) (Yeast), this protein is ATP-dependent RNA helicase MRH4, mitochondrial (MRH4).